The primary structure comprises 177 residues: Large ribosomal subunit protein uL5m (177 aa).

It belongs to the universal ribosomal protein uL5 family.

The protein resides in the mitochondrion. This is Large ribosomal subunit protein uL5m (RPL5) from Acanthamoeba castellanii (Amoeba).